The following is a 235-amino-acid chain: Transmembrane protein 176A (235 aa).

Position 38 is a phosphoserine (S38). 4 helical membrane-spanning segments follow: residues 55–75, 86–106, 113–133, and 193–213; these read VASW…GGFF, SGAA…AFIY, YWAL…IAAL, and AMLL…LWLY.

Belongs to the TMEM176 family. Interacts with MCOLN2.

It localises to the membrane. In Homo sapiens (Human), this protein is Transmembrane protein 176A (TMEM176A).